Reading from the N-terminus, the 469-residue chain is Solute carrier family 52, riboflavin transporter, member 3 (469 aa).

Over 1–6 (MALLTH) the chain is Cytoplasmic. A helical transmembrane segment spans residues 7–27 (LLVCTFGMGSWVAINGLWVEL). The Extracellular portion of the chain corresponds to 28–43 (PLLVTELPEGWYLPSY). The helical transmembrane segment at 44–64 (LTMVIQLANIGPLLVTLLHHF) threads the bilayer. The Cytoplasmic segment spans residues 65-71 (QPSCLSE). Residues 72–92 (VPIIFTVLAVGTVACALFAFL) form a helical membrane-spanning segment. The Extracellular segment spans residues 93–105 (WNVTSWVLDGRHS). N-linked (GlcNAc...) asparagine glycosylation occurs at N94. A helical membrane pass occupies residues 106–126 (IAFMVLTFFLALVDCTSSVTF). Topologically, residues 127 to 137 (LPFMSRLPACY) are cytoplasmic. A helical transmembrane segment spans residues 138–158 (LTTFFVGEGLSSLLPALVALA). Topologically, residues 159–220 (QGSGLTTCVN…SRYLPANFSP (62 aa)) are extracellular. N-linked (GlcNAc...) asparagine glycosylation is present at N168. A helical transmembrane segment spans residues 221-241 (LVFFLLLSFMMACCLAAFFLL). The Cytoplasmic portion of the chain corresponds to 242–297 (QRQPRPRESSIEDLLTSQVTLHSIRPREGDDLGPPDPGPSSKAQGLPEEKTASDHP). Position 251 is a phosphoserine (S251). The segment at 266–290 (RPREGDDLGPPDPGPSSKAQGLPEE) is disordered. Residues 298–318 (AHLAFIYVLVAFVNALTNGVL) form a helical membrane-spanning segment. Topologically, residues 319–335 (PSVQTYSCLSYGPVAYH) are extracellular. A helical transmembrane segment spans residues 336–356 (LSATLSSMANPLACFLSMFLP). Over 357 to 361 (HRSLP) the chain is Cytoplasmic. The chain crosses the membrane as a helical span at residues 362–382 (FLGVLTVLGTGFGAYNMAMAV). Residues 383–396 (MSPCPLMQGHWAGE) lie on the Extracellular side of the membrane. Residues 397–417 (ILIVASWVLFIGCLSYVKVML) form a helical membrane-spanning segment. Residues 418–427 (GVILRDRSRS) are Cytoplasmic-facing. The chain crosses the membrane as a helical span at residues 428–448 (ALVWCGAAVQLGSLLGALLMF). Residues 449–469 (PLVNVLRLFSSADFCSLQCSA) are Extracellular-facing.

Belongs to the riboflavin transporter family.

The protein resides in the cell membrane. It carries out the reaction riboflavin(in) = riboflavin(out). Functionally, plasma membrane transporter mediating the uptake by cells of the water soluble vitamin B2/riboflavin that plays a key role in biochemical oxidation-reduction reactions of the carbohydrate, lipid, and amino acid metabolism. The polypeptide is Solute carrier family 52, riboflavin transporter, member 3 (SLC52A3) (Ailuropoda melanoleuca (Giant panda)).